The chain runs to 348 residues: Zinc transporter ZIP13 (348 aa).

At 1 to 45 (MMIQTAVAQAKTAPAGPGPWSIKDLVDLQYLDELMSIDNLDVWFC) the chain is on the cytoplasmic side. The chain crosses the membrane as a helical span at residues 46-66 (SLVGSIAIGLSGIFPLLVIPI). Topologically, residues 67–83 (EAGTALKTEAGCQKLKK) are lumenal. The chain crosses the membrane as a helical span at residues 84–104 (LLSFAIGGLLGDVFLHLLPEA). Topologically, residues 105 to 118 (WAYTSSPGGSHRHY) are cytoplasmic. Residues 119-139 (CTQGLWVIGGLMSFLTLEKMF) traverse the membrane as a helical segment. The Lumenal segment spans residues 140 to 219 (PDEVGDPETK…CIDNFTHGLA (80 aa)). The disordered stretch occupies residues 144–192 (GDPETKTSFQRTTSSSSDLSSQFSVSPQTNGICSNNNSDSKPKTDISPY). Positions 149–169 (KTSFQRTTSSSSDLSSQFSVS) are enriched in low complexity. The segment covering 170 to 182 (PQTNGICSNNNSD) has biased composition (polar residues). Residues 220–240 (VAGSFLVSRKVGFLTTFAILL) traverse the membrane as a helical segment. An XEXPHE-motif motif is present at residues 241–246 (HEIPHE). Topologically, residues 241-262 (HEIPHEVGDFAILLRAGFDRWK) are cytoplasmic. The helical transmembrane segment at 263 to 283 (AARMQLSTALGGVLGACFALC) threads the bilayer. The Lumenal portion of the chain corresponds to 284–294 (SQSQHGAENAT). The helical transmembrane segment at 295–315 (TWILPFTSGGFLYIALVNVVP) threads the bilayer. Residues 316-326 (DLLEETNPRNS) are Cytoplasmic-facing. The helical transmembrane segment at 327 to 347 (LLQVLLLFSGIGVMALLSIAM) threads the bilayer. Residue aspartate 348 is a topological domain, lumenal.

The protein belongs to the ZIP transporter (TC 2.A.5) family. Homodimer.

It is found in the golgi apparatus membrane. It localises to the cytoplasmic vesicle membrane. Its subcellular location is the endoplasmic reticulum membrane. The enzyme catalyses Zn(2+)(in) = Zn(2+)(out). Functionally, functions as a zinc transporter transporting Zn(2+) from the Golgi apparatus to the cytosol and thus influences the zinc level at least in areas of the cytosol. The sequence is that of Zinc transporter ZIP13 from Danio rerio (Zebrafish).